Reading from the N-terminus, the 587-residue chain is Arginine--tRNA ligase (587 aa).

The short motif at 123-133 (ANVAKPLHVGH) is the 'HIGH' region element.

It belongs to the class-I aminoacyl-tRNA synthetase family. In terms of assembly, monomer.

The protein localises to the cytoplasm. It carries out the reaction tRNA(Arg) + L-arginine + ATP = L-arginyl-tRNA(Arg) + AMP + diphosphate. The chain is Arginine--tRNA ligase from Alkaliphilus oremlandii (strain OhILAs) (Clostridium oremlandii (strain OhILAs)).